Reading from the N-terminus, the 282-residue chain is ATP phosphoribosyltransferase (282 aa).

Belongs to the ATP phosphoribosyltransferase family. Long subfamily. It depends on Mg(2+) as a cofactor.

It is found in the cytoplasm. The enzyme catalyses 1-(5-phospho-beta-D-ribosyl)-ATP + diphosphate = 5-phospho-alpha-D-ribose 1-diphosphate + ATP. The protein operates within amino-acid biosynthesis; L-histidine biosynthesis; L-histidine from 5-phospho-alpha-D-ribose 1-diphosphate: step 1/9. Feedback inhibited by histidine. Its function is as follows. Catalyzes the condensation of ATP and 5-phosphoribose 1-diphosphate to form N'-(5'-phosphoribosyl)-ATP (PR-ATP). Has a crucial role in the pathway because the rate of histidine biosynthesis seems to be controlled primarily by regulation of HisG enzymatic activity. This chain is ATP phosphoribosyltransferase, found in Saccharopolyspora erythraea (strain ATCC 11635 / DSM 40517 / JCM 4748 / NBRC 13426 / NCIMB 8594 / NRRL 2338).